The chain runs to 158 residues: Ribonuclease H (158 aa).

The RNase H type-1 domain occupies glutamate 3–glutamate 144. 4 residues coordinate Mg(2+): aspartate 12, glutamate 50, aspartate 72, and aspartate 136.

It belongs to the RNase H family. Monomer. It depends on Mg(2+) as a cofactor.

It is found in the cytoplasm. The enzyme catalyses Endonucleolytic cleavage to 5'-phosphomonoester.. Functionally, endonuclease that specifically degrades the RNA of RNA-DNA hybrids. In Shewanella sp. (strain MR-4), this protein is Ribonuclease H.